A 421-amino-acid polypeptide reads, in one-letter code: Signal recognition particle receptor FtsY (421 aa).

The segment covering 1–10 has biased composition (basic residues); sequence MFSFFRRKKK. Residues 1–31 are disordered; sequence MFSFFRRKKKQETPALEEAQIQETAAKAESE. GTP contacts are provided by residues 228-235, 309-313, and 373-376; these read GINGAGKT, DTAGR, and TKLD.

It belongs to the GTP-binding SRP family. FtsY subfamily. Part of the signal recognition particle protein translocation system, which is composed of SRP and FtsY. SRP is a ribonucleoprotein composed of Ffh and a 4.5S RNA molecule.

The protein resides in the cell inner membrane. It is found in the cytoplasm. It carries out the reaction GTP + H2O = GDP + phosphate + H(+). In terms of biological role, involved in targeting and insertion of nascent membrane proteins into the cytoplasmic membrane. Acts as a receptor for the complex formed by the signal recognition particle (SRP) and the ribosome-nascent chain (RNC). Interaction with SRP-RNC leads to the transfer of the RNC complex to the Sec translocase for insertion into the membrane, the hydrolysis of GTP by both Ffh and FtsY, and the dissociation of the SRP-FtsY complex into the individual components. In Neisseria meningitidis serogroup A / serotype 4A (strain DSM 15465 / Z2491), this protein is Signal recognition particle receptor FtsY.